The following is a 342-amino-acid chain: NADH-ubiquinone oxidoreductase chain 2 (342 aa).

The next 9 membrane-spanning stretches (helical) occupy residues 25–45, 58–78, 94–114, 146–166, 174–194, 195–215, 238–258, 274–294, and 316–336; these read TPWL…IPML, IKYF…ILII, MMIM…FWLP, MSSF…MGGL, ILAY…TISE, NTWE…IFMF, FMMM…GFLP, LVLL…RISF, and VVAL…TSNF.

Belongs to the complex I subunit 2 family.

The protein localises to the mitochondrion inner membrane. The enzyme catalyses a ubiquinone + NADH + 5 H(+)(in) = a ubiquinol + NAD(+) + 4 H(+)(out). Core subunit of the mitochondrial membrane respiratory chain NADH dehydrogenase (Complex I) that is believed to belong to the minimal assembly required for catalysis. Complex I functions in the transfer of electrons from NADH to the respiratory chain. The immediate electron acceptor for the enzyme is believed to be ubiquinone. This is NADH-ubiquinone oxidoreductase chain 2 (ND2) from Locusta migratoria (Migratory locust).